Reading from the N-terminus, the 138-residue chain is Small ribosomal subunit protein uS11c (138 aa).

Residues 1–23 (MAKPILRIGSRKNTRSSSRKNVR) form a disordered region. Basic residues predominate over residues 9–23 (GSRKNTRSSSRKNVR).

Belongs to the universal ribosomal protein uS11 family. In terms of assembly, part of the 30S ribosomal subunit.

Its subcellular location is the plastid. The protein localises to the chloroplast. This chain is Small ribosomal subunit protein uS11c, found in Nasturtium officinale (Watercress).